The following is a 595-amino-acid chain: Elongation factor 4 (595 aa).

The tr-type G domain maps to 2–184 (KNIRNFSIIA…QIVERIPTPK (183 aa)). Residues 14-19 (DHGKST) and 131-134 (NKID) each bind GTP.

This sequence belongs to the TRAFAC class translation factor GTPase superfamily. Classic translation factor GTPase family. LepA subfamily.

Its subcellular location is the cell inner membrane. The catalysed reaction is GTP + H2O = GDP + phosphate + H(+). Its function is as follows. Required for accurate and efficient protein synthesis under certain stress conditions. May act as a fidelity factor of the translation reaction, by catalyzing a one-codon backward translocation of tRNAs on improperly translocated ribosomes. Back-translocation proceeds from a post-translocation (POST) complex to a pre-translocation (PRE) complex, thus giving elongation factor G a second chance to translocate the tRNAs correctly. Binds to ribosomes in a GTP-dependent manner. This Vesicomyosocius okutanii subsp. Calyptogena okutanii (strain HA) protein is Elongation factor 4.